The following is a 258-amino-acid chain: Tryptophan synthase alpha chain (258 aa).

Active-site proton acceptor residues include Glu-46 and Asp-57.

The protein belongs to the TrpA family. Tetramer of two alpha and two beta chains.

The catalysed reaction is (1S,2R)-1-C-(indol-3-yl)glycerol 3-phosphate + L-serine = D-glyceraldehyde 3-phosphate + L-tryptophan + H2O. It participates in amino-acid biosynthesis; L-tryptophan biosynthesis; L-tryptophan from chorismate: step 5/5. The alpha subunit is responsible for the aldol cleavage of indoleglycerol phosphate to indole and glyceraldehyde 3-phosphate. In Phocaeicola vulgatus (strain ATCC 8482 / DSM 1447 / JCM 5826 / CCUG 4940 / NBRC 14291 / NCTC 11154) (Bacteroides vulgatus), this protein is Tryptophan synthase alpha chain.